The primary structure comprises 143 residues: HTH-type transcriptional regulator MntR (143 aa).

Residues 1–63 (MPTPSMEDYL…YERYRGLVLT (63 aa)) form the HTH dtxR-type domain. 6 residues coordinate Mn(2+): Asp8, Glu11, His77, Glu99, Glu102, and His103.

This sequence belongs to the DtxR/MntR family. In terms of assembly, homodimer.

Its subcellular location is the cytoplasm. With respect to regulation, DNA binding is strongly activated by Mn(2+). Its function is as follows. Central regulator of manganese homeostasis. The protein is HTH-type transcriptional regulator MntR of Shouchella clausii (strain KSM-K16) (Alkalihalobacillus clausii).